The following is a 139-amino-acid chain: 3-hydroxyacyl-[acyl-carrier-protein] dehydratase FabZ (139 aa).

Residue histidine 47 is part of the active site.

The protein belongs to the thioester dehydratase family. FabZ subfamily.

The protein localises to the cytoplasm. It catalyses the reaction a (3R)-hydroxyacyl-[ACP] = a (2E)-enoyl-[ACP] + H2O. Functionally, involved in unsaturated fatty acids biosynthesis. Catalyzes the dehydration of short chain beta-hydroxyacyl-ACPs and long chain saturated and unsaturated beta-hydroxyacyl-ACPs. The polypeptide is 3-hydroxyacyl-[acyl-carrier-protein] dehydratase FabZ (Clostridium perfringens (strain ATCC 13124 / DSM 756 / JCM 1290 / NCIMB 6125 / NCTC 8237 / Type A)).